The primary structure comprises 1498 residues: ATP-binding cassette sub-family C member 6 (1498 aa).

The Extracellular portion of the chain corresponds to 1-37 (MNRGRSMATPGEQCAGLRVWNQTEQEPAAYHLLSLCF). The N-linked (GlcNAc...) asparagine glycan is linked to asparagine 21. The helical transmembrane segment at 38 to 58 (VRAASSWVPPMYLWVLGPIYL) threads the bilayer. Over 59–78 (LYIHRHGRCYLRMSHLFKTK) the chain is Cytoplasmic. Residues 79–99 (MVLGLALILLYTFNVAVPLWR) traverse the membrane as a helical segment. At 100-104 (IHQGV) the chain is on the extracellular side. A helical membrane pass occupies residues 105 to 125 (PQAPELLIHPTVWLTTMSFAT). Over 126–137 (FLIHMERRKGVR) the chain is Cytoplasmic. The helical transmembrane segment at 138–155 (SSGVLFGYWLLCCILPGI) threads the bilayer. Topologically, residues 156–173 (NTVQQASAGNFRQEPLHH) are extracellular. A helical membrane pass occupies residues 174–194 (LATYLCLSLVVAELVLSCLVD). Residues 195–300 (QPPFFSEDSQ…RSQRGPLLRA (106 aa)) are Cytoplasmic-facing. A helical transmembrane segment spans residues 301-321 (IWRVFRSTFLLGTLSLVISDA). Residues 309-592 (FLLGTLSLVI…LPFSVHCIVQ (284 aa)) form the ABC transmembrane type-1 1 domain. Residues 322-347 (FRFAVPKLLSLFLEFMGDRNSSAWTG) are Extracellular-facing. Asparagine 341 carries an N-linked (GlcNAc...) asparagine glycan. The helical transmembrane segment at 348-368 (WLLAVLMFAAACLQTLFEQQH) threads the bilayer. The Cytoplasmic segment spans residues 369 to 424 (MYRAKVLQMRLRTAITGLVYRKVLVLSSGSRKSSAAGDVVNLVSVDIQRLAESIIY). The helical transmembrane segment at 425 to 445 (LNGLWLLFLWIFVCFVYLWQL) threads the bilayer. The Extracellular segment spans residues 446–448 (LGP). The helical transmembrane segment at 449 to 469 (SALTAVAVFLSLLPLNFFITK) threads the bilayer. At 470 to 531 (KRGFHQEEQM…ALKTSTLLFS (62 aa)) the chain is on the cytoplasmic side. The chain crosses the membrane as a helical span at residues 532 to 552 (VSLVSFQVSTFLVALVVFAVH). Topologically, residues 553–574 (TLVAEDNAMDAEKAFVTLTVLS) are extracellular. The helical transmembrane segment at 575–595 (ILNKAQAFLPFSVHCIVQARV) threads the bilayer. Residues 596-934 (SFDRLAAFLC…VKTTIYLSYL (339 aa)) are Cytoplasmic-facing. In terms of domain architecture, ABC transporter 1 spans 627–851 (ISVHNGTFAW…NGALVGLLDG (225 aa)). Residue 661–668 (GPVGAGKS) coordinates ATP. Positions 855-910 (PAGTHDAATSDDLGGFPGGGRPTCRPDRPRPTEAAPVKGRSTSEVQMEASLDDPEA) are disordered. The chain crosses the membrane as a helical span at residues 935–955 (RAVGTPLCTYTLFLFLCQQVA). One can recognise an ABC transmembrane type-1 2 domain in the interval 942–1223 (CTYTLFLFLC…VVRSWTDLEN (282 aa)). The Extracellular portion of the chain corresponds to 956-992 (SFSQGYWLSLWADDPVVDGRQMHAALRGWVFGLLGCL). The chain crosses the membrane as a helical span at residues 993-1013 (QAIGLFASMAAVFLGGARASG). Residues 1014–1056 (LLFRSLLWDVARSPIGFFERTPVGNLLNRFSKETDTVDVDIPD) are Cytoplasmic-facing. The chain crosses the membrane as a helical span at residues 1057–1077 (KLRSLLTYAFGLLEVGLAVTM). Residue alanine 1078 is a topological domain, extracellular. A helical membrane pass occupies residues 1079-1099 (TPLAIVAILPLMVLYAGFQSL). The Cytoplasmic segment spans residues 1100–1170 (YVATSCQLRR…VADRWLATNL (71 aa)). The chain crosses the membrane as a helical span at residues 1171-1191 (ELLGNGLVFVAATCAVLSKAH). The Extracellular segment spans residues 1192-1193 (LS). Residues 1194-1214 (AGLVGFSVSAALQVTQTLQWV) traverse the membrane as a helical segment. Residues 1215-1498 (VRSWTDLENS…YRLAHESGLA (284 aa)) are Cytoplasmic-facing. The 235-residue stretch at 1260–1494 (IEFRDFGLRH…KGLFYRLAHE (235 aa)) folds into the ABC transporter 2 domain. Serine 1281 carries the phosphoserine modification. 1294-1301 (GRTGAGKS) lines the ATP pocket.

The protein belongs to the ABC transporter superfamily. ABCC family. Conjugate transporter (TC 3.A.1.208) subfamily. In terms of processing, glycosylated.

It localises to the basolateral cell membrane. It is found in the basal cell membrane. It carries out the reaction an S-substituted glutathione(in) + ATP + H2O = an S-substituted glutathione(out) + ADP + phosphate + H(+). The enzyme catalyses leukotriene C4(in) + ATP + H2O = leukotriene C4(out) + ADP + phosphate + H(+). Functionally, ATP-dependent transporter of the ATP-binding cassette (ABC) family that actively extrudes physiological compounds, and xenobiotics from cells. Mediates ATP-dependent transport of glutathione conjugates such as leukotriene-c4 (LTC4) and N-ethylmaleimide S-glutathione (NEM-GS) (in vitro), and an anionic cyclopentapeptide endothelin antagonist, BQ-123. May contribute to regulate the transport of organic compounds in testes across the blood-testis-barrier. In terms of biological role, mediates the release of nucleoside triphosphates, predominantly ATP, into the circulation, where it is rapidly converted into AMP and the mineralization inhibitor inorganic pyrophosphate (PPi) by the ecto-enzyme ectonucleotide pyrophosphatase phosphodiesterase 1 (ENPP1), therefore playing a role in PPi homeostasis. This chain is ATP-binding cassette sub-family C member 6 (Abcc6), found in Mus musculus (Mouse).